Reading from the N-terminus, the 1043-residue chain is Integrator complex subunit 3 (1043 aa).

Met1 is subject to N-acetylmethionine. A phosphoserine mark is found at Ser502, Ser537, and Ser995. The tract at residues 977 to 1043 (YEDSSTKPPK…GSSAVGSDSD (67 aa)) is disordered. The span at 1008 to 1022 (AEEESGSSSASEEED) shows a compositional bias: acidic residues.

Belongs to the Integrator subunit 3 family. In terms of assembly, component of the Integrator complex, composed of core subunits INTS1, INTS2, INTS3, INTS4, INTS5, INTS6, INTS7, INTS8, INTS9/RC74, INTS10, INTS11/CPSF3L, INTS12, INTS13, INTS14 and INTS15. The core complex associates with protein phosphatase 2A subunits PPP2CA and PPP2R1A, to form the Integrator-PP2A (INTAC) complex. Component of the SOSS complex, composed of SOSS-B (SOSS-B1/NABP2 or SOSS-B2/NABP1), SOSS-A/INTS3 and SOSS-C/INIP. SOSS complexes containing SOSS-B1/NABP2 are more abundant than complexes containing SOSS-B2/NABP1. Interacts with SOSS-B1/NABP2, SOSS-B2/NABP1 and SOSS-C/INIP; the interaction is direct. Interacts with NBN/NBS1.

The protein localises to the nucleus. Its subcellular location is the cytoplasm. Component of the integrator complex, a multiprotein complex that terminates RNA polymerase II (Pol II) transcription in the promoter-proximal region of genes. The integrator complex provides a quality checkpoint during transcription elongation by driving premature transcription termination of transcripts that are unfavorably configured for transcriptional elongation: the complex terminates transcription by (1) catalyzing dephosphorylation of the C-terminal domain (CTD) of Pol II subunit POLR2A/RPB1 and SUPT5H/SPT5, (2) degrading the exiting nascent RNA transcript via endonuclease activity and (3) promoting the release of Pol II from bound DNA. The integrator complex is also involved in terminating the synthesis of non-coding Pol II transcripts, such as enhancer RNAs (eRNAs), small nuclear RNAs (snRNAs), telomerase RNAs and long non-coding RNAs (lncRNAs). Within the integrator complex, INTS3 is involved in the post-termination step: INTS3 binds INTS7 in the open conformation of integrator complex and prevents the rebinding of Pol II to the integrator after termination cycle. Mediates recruitment of cytoplasmic dynein to the nuclear envelope, probably as component of the integrator complex. Its function is as follows. Component of the SOSS complex, a multiprotein complex that functions downstream of the MRN complex to promote DNA repair and G2/M checkpoint. The SOSS complex associates with single-stranded DNA at DNA lesions and influences diverse endpoints in the cellular DNA damage response including cell-cycle checkpoint activation, recombinational repair and maintenance of genomic stability. The SOSS complex is required for efficient homologous recombination-dependent repair of double-strand breaks (DSBs) and ATM-dependent signaling pathways. In the SOSS complex, it is required for the assembly of the complex and for stabilization of the complex at DNA damage sites. The chain is Integrator complex subunit 3 from Homo sapiens (Human).